A 211-amino-acid chain; its full sequence is Scoloptoxin SSD43 (211 aa).

A signal peptide spans methionine 1–glycine 20.

Post-translationally, contains 3 disulfide bonds. In terms of tissue distribution, expressed by the venom gland.

The protein resides in the secreted. Its function is as follows. Shows trypsin inhibiting activity. The protein is highly thermally stable, since its incubation in boiling water during 10 minutes does not reduce its activity. The chain is Scoloptoxin SSD43 from Scolopendra dehaani (Thai centipede).